Here is a 621-residue protein sequence, read N- to C-terminus: Probable bifunctional dTTP/UTP pyrophosphatase/methyltransferase protein (621 aa).

Positions 11 to 223 (LHKRVVLASA…PPRPEDLRRS (213 aa)) are MAF-like. Serine 21 is subject to Phosphoserine. Aspartate 88 acts as the Proton acceptor; for pyrophosphatase activity in catalysis. Serine 228 carries the phosphoserine modification. Threonine 234 carries the post-translational modification Phosphothreonine. A disordered region spans residues 235-279 (FEDLSDVEGGGSEPTQRDAGSRDEKAEAGEAGQATAEAECHRTRE). Position 239 is a phosphoserine (serine 239). A compositionally biased stretch (basic and acidic residues) spans 249–262 (TQRDAGSRDEKAEA). The segment at 277 to 621 (TRETLPPFPT…DAILATKVAP (345 aa)) is ASMT-like. Position 421 is a phosphoserine (serine 421). Residues aspartate 482, 508-510 (GDF), and arginine 525 contribute to the S-adenosyl-L-methionine site.

In the N-terminal section; belongs to the Maf family. YhdE subfamily. This sequence in the C-terminal section; belongs to the class I-like SAM-binding methyltransferase superfamily. Cation-independent O-methyltransferase family. Homodimer. It depends on a divalent metal cation as a cofactor. As to expression, widely expressed. In adult, highly expressed in pancreas, placenta, fibroblast, thymus, prostate, testis, ovary and colon. Expressed at lower levels in spleen, small intestine and leukocytes. In fetus, expressed at high levels in the lung and kidney and at lower level in brain and liver.

It catalyses the reaction dTTP + H2O = dTMP + diphosphate + H(+). It carries out the reaction UTP + H2O = UMP + diphosphate + H(+). The enzyme catalyses CTP + H2O = CMP + diphosphate + H(+). The catalysed reaction is psi-UTP + H2O = psi-UMP + diphosphate + H(+). It catalyses the reaction 5-methyl-UTP + H2O = 5-methyl-UMP + diphosphate + H(+). It carries out the reaction 5-methyl-CTP + H2O = 5-methyl-CMP + diphosphate + H(+). Nucleoside triphosphate pyrophosphatase that hydrolyzes dTTP and UTP. Can also hydrolyze CTP and the modified nucleotides pseudo-UTP, 5-methyl-UTP (m(5)UTP) and 5-methyl-CTP (m(5)CTP). Has weak activity with dCTP, 8-oxo-GTP and N(4)-methyl-dCTP. May have a dual role in cell division arrest and in preventing the incorporation of modified nucleotides into cellular nucleic acids. In addition, the presence of the putative catalytic domain of S-adenosyl-L-methionine binding in the C-terminal region argues for a methyltransferase activity. In Homo sapiens (Human), this protein is Probable bifunctional dTTP/UTP pyrophosphatase/methyltransferase protein (ASMTL).